We begin with the raw amino-acid sequence, 331 residues long: Ketol-acid reductoisomerase (NADP(+)) (331 aa).

The region spanning 2 to 181 (IKKYYESDAD…GATRAVVFET (180 aa)) is the KARI N-terminal Rossmann domain. Residues 25-28 (YGSQ), R48, S52, and 82-85 (DESQ) contribute to the NADP(+) site. H107 is an active-site residue. Residue G133 coordinates NADP(+). The region spanning 182–327 (TFREETETDL…AEIRGLMPQF (146 aa)) is the KARI C-terminal knotted domain. Mg(2+) is bound by residues D190, E194, E226, and E230. S251 contacts substrate.

This sequence belongs to the ketol-acid reductoisomerase family. Mg(2+) serves as cofactor.

It catalyses the reaction (2R)-2,3-dihydroxy-3-methylbutanoate + NADP(+) = (2S)-2-acetolactate + NADPH + H(+). The catalysed reaction is (2R,3R)-2,3-dihydroxy-3-methylpentanoate + NADP(+) = (S)-2-ethyl-2-hydroxy-3-oxobutanoate + NADPH + H(+). The protein operates within amino-acid biosynthesis; L-isoleucine biosynthesis; L-isoleucine from 2-oxobutanoate: step 2/4. It participates in amino-acid biosynthesis; L-valine biosynthesis; L-valine from pyruvate: step 2/4. Its function is as follows. Involved in the biosynthesis of branched-chain amino acids (BCAA). Catalyzes an alkyl-migration followed by a ketol-acid reduction of (S)-2-acetolactate (S2AL) to yield (R)-2,3-dihydroxy-isovalerate. In the isomerase reaction, S2AL is rearranged via a Mg-dependent methyl migration to produce 3-hydroxy-3-methyl-2-ketobutyrate (HMKB). In the reductase reaction, this 2-ketoacid undergoes a metal-dependent reduction by NADPH to yield (R)-2,3-dihydroxy-isovalerate. In Methanosphaerula palustris (strain ATCC BAA-1556 / DSM 19958 / E1-9c), this protein is Ketol-acid reductoisomerase (NADP(+)).